Consider the following 477-residue polypeptide: Ribulose bisphosphate carboxylase large chain (477 aa).

Positions 1 to 2 (MS) are excised as a propeptide. An N-acetylproline modification is found at Pro-3. Position 14 is an N6,N6,N6-trimethyllysine (Lys-14). The substrate site is built by Asn-123 and Thr-173. The Proton acceptor role is filled by Lys-175. Lys-177 is a binding site for substrate. Residues Lys-201, Asp-203, and Glu-204 each contribute to the Mg(2+) site. Lys-201 carries the N6-carboxylysine modification. The active-site Proton acceptor is the His-294. Substrate-binding residues include Arg-295, His-327, and Ser-379.

It belongs to the RuBisCO large chain family. Type I subfamily. As to quaternary structure, heterohexadecamer of 8 large chains and 8 small chains; disulfide-linked. The disulfide link is formed within the large subunit homodimers. Requires Mg(2+) as cofactor. The disulfide bond which can form in the large chain dimeric partners within the hexadecamer appears to be associated with oxidative stress and protein turnover.

Its subcellular location is the plastid. It is found in the chloroplast. It carries out the reaction 2 (2R)-3-phosphoglycerate + 2 H(+) = D-ribulose 1,5-bisphosphate + CO2 + H2O. It catalyses the reaction D-ribulose 1,5-bisphosphate + O2 = 2-phosphoglycolate + (2R)-3-phosphoglycerate + 2 H(+). Its function is as follows. RuBisCO catalyzes two reactions: the carboxylation of D-ribulose 1,5-bisphosphate, the primary event in carbon dioxide fixation, as well as the oxidative fragmentation of the pentose substrate in the photorespiration process. Both reactions occur simultaneously and in competition at the same active site. The polypeptide is Ribulose bisphosphate carboxylase large chain (Cichorium intybus (Chicory)).